A 584-amino-acid chain; its full sequence is Probable DNA ligase (584 aa).

Glu248 serves as a coordination point for ATP. Catalysis depends on Lys250, which acts as the N6-AMP-lysine intermediate. ATP is bound by residues Arg255, Arg270, Glu299, Phe339, Arg416, and Lys422.

The protein belongs to the ATP-dependent DNA ligase family. Mg(2+) is required as a cofactor.

It carries out the reaction ATP + (deoxyribonucleotide)n-3'-hydroxyl + 5'-phospho-(deoxyribonucleotide)m = (deoxyribonucleotide)n+m + AMP + diphosphate.. Its function is as follows. DNA ligase that seals nicks in double-stranded DNA during DNA replication, DNA recombination and DNA repair. The protein is Probable DNA ligase of Aquifex aeolicus (strain VF5).